Reading from the N-terminus, the 31-residue chain is Cyclotide vinc-B (31 aa).

A cross-link (cyclopeptide (Gly-Asn)) is located at residues 1-31 (GSIPACGESCFKGKCYTPGCTCSKYPLCAKN). 3 disulfides stabilise this stretch: cysteine 6-cysteine 20, cysteine 10-cysteine 22, and cysteine 15-cysteine 28.

Belongs to the cyclotide family. Post-translationally, this is a cyclic peptide.

Probably participates in a plant defense mechanism. This is Cyclotide vinc-B from Viola inconspicua.